Consider the following 622-residue polypeptide: Membrane protein insertase YidC (622 aa).

Residues 6–26 (FIAVVLSVLVLVGASFLQELL) form a helical membrane-spanning segment. The disordered stretch occupies residues 37 to 71 (AEHTLSAVPEETRTQSAHGGAADTQETTQPAAHPS). 4 consecutive transmembrane segments (helical) span residues 413-433 (LIPNWGVAIILVTIAIKVLFF), 483-503 (LSGCLPTLVQMPIIFAMYRLF), 513-533 (MFIPYWIPDLSLADSVWTLPF), and 579-599 (VMPLFFFFFFYDAPSGLLVYW).

It belongs to the OXA1/ALB3/YidC family. Type 1 subfamily. Interacts with the Sec translocase complex via SecD. Specifically interacts with transmembrane segments of nascent integral membrane proteins during membrane integration.

It is found in the cell inner membrane. Required for the insertion and/or proper folding and/or complex formation of integral membrane proteins into the membrane. Involved in integration of membrane proteins that insert both dependently and independently of the Sec translocase complex, as well as at least some lipoproteins. Aids folding of multispanning membrane proteins. The protein is Membrane protein insertase YidC of Treponema pallidum (strain Nichols).